Reading from the N-terminus, the 311-residue chain is Methionyl-tRNA formyltransferase (311 aa).

Residue 112–115 (SLLP) participates in (6S)-5,6,7,8-tetrahydrofolate binding.

The protein belongs to the Fmt family.

The catalysed reaction is L-methionyl-tRNA(fMet) + (6R)-10-formyltetrahydrofolate = N-formyl-L-methionyl-tRNA(fMet) + (6S)-5,6,7,8-tetrahydrofolate + H(+). Its function is as follows. Attaches a formyl group to the free amino group of methionyl-tRNA(fMet). The formyl group appears to play a dual role in the initiator identity of N-formylmethionyl-tRNA by promoting its recognition by IF2 and preventing the misappropriation of this tRNA by the elongation apparatus. This Sinorhizobium fredii (strain NBRC 101917 / NGR234) protein is Methionyl-tRNA formyltransferase.